A 215-amino-acid chain; its full sequence is Ribose-5-phosphate isomerase A (215 aa).

Substrate is bound by residues 26 to 29 (TGST), 79 to 82 (DGAD), and 92 to 95 (KGGG). Catalysis depends on Glu101, which acts as the Proton acceptor. Substrate is bound at residue Lys119.

Belongs to the ribose 5-phosphate isomerase family. As to quaternary structure, homodimer.

The enzyme catalyses aldehydo-D-ribose 5-phosphate = D-ribulose 5-phosphate. It participates in carbohydrate degradation; pentose phosphate pathway; D-ribose 5-phosphate from D-ribulose 5-phosphate (non-oxidative stage): step 1/1. Its function is as follows. Catalyzes the reversible conversion of ribose-5-phosphate to ribulose 5-phosphate. The protein is Ribose-5-phosphate isomerase A of Xanthomonas axonopodis pv. citri (strain 306).